A 346-amino-acid chain; its full sequence is Biotin synthase (346 aa).

The segment covering 1 to 12 (MPDTATVSSESE) has biased composition (polar residues). The disordered stretch occupies residues 1-21 (MPDTATVSSESEFSGHAHVAA). The region spanning 64–292 (NKVQLCSLLS…QSMVRLSAGR (229 aa)) is the Radical SAM core domain. [4Fe-4S] cluster is bound by residues cysteine 79, cysteine 83, and cysteine 86. Positions 123, 155, 215, and 287 each coordinate [2Fe-2S] cluster.

It belongs to the radical SAM superfamily. Biotin synthase family. Homodimer. [4Fe-4S] cluster serves as cofactor. It depends on [2Fe-2S] cluster as a cofactor.

The catalysed reaction is (4R,5S)-dethiobiotin + (sulfur carrier)-SH + 2 reduced [2Fe-2S]-[ferredoxin] + 2 S-adenosyl-L-methionine = (sulfur carrier)-H + biotin + 2 5'-deoxyadenosine + 2 L-methionine + 2 oxidized [2Fe-2S]-[ferredoxin]. It functions in the pathway cofactor biosynthesis; biotin biosynthesis; biotin from 7,8-diaminononanoate: step 2/2. Its function is as follows. Catalyzes the conversion of dethiobiotin (DTB) to biotin by the insertion of a sulfur atom into dethiobiotin via a radical-based mechanism. This is Biotin synthase from Myxococcus xanthus (strain DK1622).